The primary structure comprises 98 residues: Small ribosomal subunit protein bS21B (98 aa).

Residues 61-98 are disordered; the sequence is KLQREGLLPMKPKPVFGAGAGGERGGRGGPGAGPRGPR. The segment covering 78–98 has biased composition (gly residues); sequence AGAGGERGGRGGPGAGPRGPR.

Belongs to the bacterial ribosomal protein bS21 family.

The protein is Small ribosomal subunit protein bS21B of Bradyrhizobium diazoefficiens (strain JCM 10833 / BCRC 13528 / IAM 13628 / NBRC 14792 / USDA 110).